Reading from the N-terminus, the 458-residue chain is Mannan endo-1,6-alpha-mannosidase DFG5 (458 aa).

Positions 1-26 are cleaved as a signal peptide; the sequence is MIVNISAKMILSICFTFLSFFKATHA. N-linked (GlcNAc...) asparagine glycosylation is found at Asn89, Asn114, Asn138, Asn208, Asn231, Asn245, Asn270, Asn273, and Asn417. A disordered region spans residues 399 to 418; it reads PYKEDNGGTSKGDANAGMNS. A lipid anchor (GPI-anchor amidated glycine) is attached at Gly437. A propeptide spans 438-458 (removed in mature form); the sequence is AAIITAVILSVLTGGAVWMLF.

It belongs to the glycosyl hydrolase 76 family. In terms of processing, N-glycosylated.

The protein resides in the cell membrane. The enzyme catalyses Random hydrolysis of (1-&gt;6)-alpha-D-mannosidic linkages in unbranched (1-&gt;6)-mannans.. Required for normal synthesis of the cell wall. The protein is Mannan endo-1,6-alpha-mannosidase DFG5 (DFG5) of Saccharomyces cerevisiae (strain ATCC 204508 / S288c) (Baker's yeast).